An 81-amino-acid polypeptide reads, in one-letter code: Small ribosomal subunit protein bS16c (81 aa).

Belongs to the bacterial ribosomal protein bS16 family.

It is found in the plastid. The protein localises to the chloroplast. This chain is Small ribosomal subunit protein bS16c, found in Emiliania huxleyi (Coccolithophore).